The sequence spans 404 residues: Serine/threonine transporter SstT (404 aa).

The next 8 helical transmembrane spans lie at 17–37 (IGIG…LTGF), 39–59 (ILGK…VFAL), 75–95 (MTLI…VAVL), 138–158 (ALAT…GLAL), 179–199 (IVVW…FTTI), 212–232 (FLIL…NPLI), 287–307 (IPLG…VLTL), and 313–333 (FGIP…AVSA).

This sequence belongs to the dicarboxylate/amino acid:cation symporter (DAACS) (TC 2.A.23) family.

It localises to the cell membrane. It carries out the reaction L-serine(in) + Na(+)(in) = L-serine(out) + Na(+)(out). The catalysed reaction is L-threonine(in) + Na(+)(in) = L-threonine(out) + Na(+)(out). In terms of biological role, involved in the import of serine and threonine into the cell, with the concomitant import of sodium (symport system). This Streptococcus pyogenes serotype M12 (strain MGAS2096) protein is Serine/threonine transporter SstT.